The sequence spans 443 residues: Xaa-Pro dipeptidase (443 aa).

Mn(2+) is bound by residues Asp-244, Asp-255, His-336, Glu-381, and Glu-420.

The protein belongs to the peptidase M24B family. Bacterial-type prolidase subfamily. Requires Mn(2+) as cofactor.

It catalyses the reaction Xaa-L-Pro dipeptide + H2O = an L-alpha-amino acid + L-proline. Functionally, splits dipeptides with a prolyl residue in the C-terminal position. The protein is Xaa-Pro dipeptidase of Stenotrophomonas maltophilia (strain K279a).